Consider the following 157-residue polypeptide: Small ribosomal subunit protein uS7 (157 aa).

The protein belongs to the universal ribosomal protein uS7 family. Part of the 30S ribosomal subunit. Contacts proteins S9 and S11.

Its function is as follows. One of the primary rRNA binding proteins, it binds directly to 16S rRNA where it nucleates assembly of the head domain of the 30S subunit. Is located at the subunit interface close to the decoding center, probably blocks exit of the E-site tRNA. The sequence is that of Small ribosomal subunit protein uS7 from Borrelia duttonii (strain Ly).